The chain runs to 326 residues: Glycerol-3-phosphate dehydrogenase [NAD(P)+] (326 aa).

Residues Trp16, Arg36, Arg37, and Lys106 each contribute to the NADPH site. Residues Lys106 and Gly132 each contribute to the sn-glycerol 3-phosphate site. Ala136 serves as a coordination point for NADPH. Sn-glycerol 3-phosphate contacts are provided by Lys187, Asp240, Ser250, Arg251, and Asn252. Lys187 acts as the Proton acceptor in catalysis. An NADPH-binding site is contributed by Arg251. Val271 and Glu273 together coordinate NADPH.

The protein belongs to the NAD-dependent glycerol-3-phosphate dehydrogenase family.

It is found in the cytoplasm. The catalysed reaction is sn-glycerol 3-phosphate + NAD(+) = dihydroxyacetone phosphate + NADH + H(+). It catalyses the reaction sn-glycerol 3-phosphate + NADP(+) = dihydroxyacetone phosphate + NADPH + H(+). It functions in the pathway membrane lipid metabolism; glycerophospholipid metabolism. In terms of biological role, catalyzes the reduction of the glycolytic intermediate dihydroxyacetone phosphate (DHAP) to sn-glycerol 3-phosphate (G3P), the key precursor for phospholipid synthesis. The chain is Glycerol-3-phosphate dehydrogenase [NAD(P)+] from Deinococcus geothermalis (strain DSM 11300 / CIP 105573 / AG-3a).